Consider the following 218-residue polypeptide: Small ribosomal subunit protein uS3c (218 aa).

The KH type-2 domain maps to 47-118 (VQKNIRISSG…KLNIAITRIS (72 aa)).

This sequence belongs to the universal ribosomal protein uS3 family. As to quaternary structure, part of the 30S ribosomal subunit.

Its subcellular location is the plastid. It is found in the chloroplast. This Aethionema cordifolium (Lebanon stonecress) protein is Small ribosomal subunit protein uS3c (rps3).